The sequence spans 230 residues: Probable methylthioribulose-1-phosphate dehydratase (230 aa).

Position 87 (C87) interacts with substrate. H105 and H107 together coordinate Zn(2+). Residue E129 is the Proton donor/acceptor of the active site. Residue H185 coordinates Zn(2+).

The protein belongs to the aldolase class II family. MtnB subfamily. Zn(2+) is required as a cofactor.

The protein resides in the cytoplasm. It catalyses the reaction 5-(methylsulfanyl)-D-ribulose 1-phosphate = 5-methylsulfanyl-2,3-dioxopentyl phosphate + H2O. The protein operates within amino-acid biosynthesis; L-methionine biosynthesis via salvage pathway; L-methionine from S-methyl-5-thio-alpha-D-ribose 1-phosphate: step 2/6. Its function is as follows. Catalyzes the dehydration of methylthioribulose-1-phosphate (MTRu-1-P) into 2,3-diketo-5-methylthiopentyl-1-phosphate (DK-MTP-1-P). The polypeptide is Probable methylthioribulose-1-phosphate dehydratase (Drosophila virilis (Fruit fly)).